Reading from the N-terminus, the 918-residue chain is UPF0182 protein CPR_0011 (918 aa).

The next 7 helical transmembrane spans lie at Thr8–Ile28, Leu46–Ile66, Phe91–Trp111, Ala151–Phe171, Leu200–Tyr220, Ile243–Ile263, and Ile271–Phe291.

Belongs to the UPF0182 family.

It localises to the cell membrane. This is UPF0182 protein CPR_0011 from Clostridium perfringens (strain SM101 / Type A).